The chain runs to 68 residues: Small, acid-soluble spore protein I (68 aa).

It belongs to the SspI family.

It is found in the spore core. The polypeptide is Small, acid-soluble spore protein I (Halalkalibacterium halodurans (strain ATCC BAA-125 / DSM 18197 / FERM 7344 / JCM 9153 / C-125) (Bacillus halodurans)).